The primary structure comprises 120 residues: uncharacterized protein (120 aa).

It is found in the mitochondrion. This is an uncharacterized protein from Arabidopsis thaliana (Mouse-ear cress).